The chain runs to 591 residues: V-type ATP synthase alpha chain (591 aa).

242–249 (GPFGAGKT) provides a ligand contact to ATP.

The protein belongs to the ATPase alpha/beta chains family.

It carries out the reaction ATP + H2O + 4 H(+)(in) = ADP + phosphate + 5 H(+)(out). Functionally, produces ATP from ADP in the presence of a proton gradient across the membrane. The V-type alpha chain is a catalytic subunit. The chain is V-type ATP synthase alpha chain from Chlamydia abortus (strain DSM 27085 / S26/3) (Chlamydophila abortus).